A 434-amino-acid chain; its full sequence is Glutamate-1-semialdehyde 2,1-aminomutase (434 aa).

N6-(pyridoxal phosphate)lysine is present on Lys-271.

Belongs to the class-III pyridoxal-phosphate-dependent aminotransferase family. HemL subfamily. In terms of assembly, homodimer. It depends on pyridoxal 5'-phosphate as a cofactor.

Its subcellular location is the cytoplasm. It carries out the reaction (S)-4-amino-5-oxopentanoate = 5-aminolevulinate. It functions in the pathway porphyrin-containing compound metabolism; protoporphyrin-IX biosynthesis; 5-aminolevulinate from L-glutamyl-tRNA(Glu): step 2/2. Its pathway is porphyrin-containing compound metabolism; chlorophyll biosynthesis. The protein is Glutamate-1-semialdehyde 2,1-aminomutase of Prochlorococcus marinus (strain MIT 9312).